The primary structure comprises 354 residues: 4-hydroxy-3-methylbut-2-en-1-yl diphosphate synthase (flavodoxin) (354 aa).

Cys-263, Cys-266, Cys-298, and Glu-305 together coordinate [4Fe-4S] cluster.

It belongs to the IspG family. It depends on [4Fe-4S] cluster as a cofactor.

The catalysed reaction is (2E)-4-hydroxy-3-methylbut-2-enyl diphosphate + oxidized [flavodoxin] + H2O + 2 H(+) = 2-C-methyl-D-erythritol 2,4-cyclic diphosphate + reduced [flavodoxin]. Its pathway is isoprenoid biosynthesis; isopentenyl diphosphate biosynthesis via DXP pathway; isopentenyl diphosphate from 1-deoxy-D-xylulose 5-phosphate: step 5/6. Functionally, converts 2C-methyl-D-erythritol 2,4-cyclodiphosphate (ME-2,4cPP) into 1-hydroxy-2-methyl-2-(E)-butenyl 4-diphosphate. The polypeptide is 4-hydroxy-3-methylbut-2-en-1-yl diphosphate synthase (flavodoxin) (Fusobacterium nucleatum subsp. nucleatum (strain ATCC 25586 / DSM 15643 / BCRC 10681 / CIP 101130 / JCM 8532 / KCTC 2640 / LMG 13131 / VPI 4355)).